Consider the following 308-residue polypeptide: Insoluble matrix shell protein 4 (308 aa).

Disordered regions lie at residues H1–Y21, N47–V104, and Y134–S250. Positions N47–S99 are enriched in low complexity.

As to expression, component of the acid-insoluble organic matrix of the calcified shell.

It localises to the secreted. The polypeptide is Insoluble matrix shell protein 4 (Ruditapes philippinarum (Japanese carpet shell)).